The following is a 628-amino-acid chain: Phosphomethylpyrimidine synthase (628 aa).

Substrate is bound by residues asparagine 229, methionine 258, tyrosine 287, histidine 323, 343–345 (SRG), 384–387 (DGLR), and glutamate 423. Histidine 427 is a binding site for Zn(2+). Tyrosine 450 is a binding site for substrate. Histidine 491 serves as a coordination point for Zn(2+). [4Fe-4S] cluster-binding residues include cysteine 571, cysteine 574, and cysteine 579.

Belongs to the ThiC family. As to quaternary structure, homodimer. It depends on [4Fe-4S] cluster as a cofactor.

The catalysed reaction is 5-amino-1-(5-phospho-beta-D-ribosyl)imidazole + S-adenosyl-L-methionine = 4-amino-2-methyl-5-(phosphooxymethyl)pyrimidine + CO + 5'-deoxyadenosine + formate + L-methionine + 3 H(+). The protein operates within cofactor biosynthesis; thiamine diphosphate biosynthesis. In terms of biological role, catalyzes the synthesis of the hydroxymethylpyrimidine phosphate (HMP-P) moiety of thiamine from aminoimidazole ribotide (AIR) in a radical S-adenosyl-L-methionine (SAM)-dependent reaction. The polypeptide is Phosphomethylpyrimidine synthase (Variovorax paradoxus (strain S110)).